The chain runs to 475 residues: 3-isopropylmalate dehydratase large subunit (475 aa).

[4Fe-4S] cluster-binding residues include Cys-353, Cys-414, and Cys-417.

Belongs to the aconitase/IPM isomerase family. LeuC type 1 subfamily. Heterodimer of LeuC and LeuD. Requires [4Fe-4S] cluster as cofactor.

The enzyme catalyses (2R,3S)-3-isopropylmalate = (2S)-2-isopropylmalate. Its pathway is amino-acid biosynthesis; L-leucine biosynthesis; L-leucine from 3-methyl-2-oxobutanoate: step 2/4. Its function is as follows. Catalyzes the isomerization between 2-isopropylmalate and 3-isopropylmalate, via the formation of 2-isopropylmaleate. The polypeptide is 3-isopropylmalate dehydratase large subunit (Stutzerimonas stutzeri (strain A1501) (Pseudomonas stutzeri)).